Reading from the N-terminus, the 322-residue chain is Undecaprenyl-phosphate 4-deoxy-4-formamido-L-arabinose transferase (322 aa).

Over 1 to 235 (MFEIHPVKKV…TCLTTTPLRM (235 aa)) the chain is Cytoplasmic. Residues 236–256 (LSLLGSIIAIGGFSIAVLLVI) traverse the membrane as a helical segment. Over 257 to 269 (LRLTFGPQWAAEG) the chain is Periplasmic. A helical transmembrane segment spans residues 270–290 (VFMLFAVLFTFIGAQFIGMGL). The Cytoplasmic portion of the chain corresponds to 291-322 (LGEYIGRIYTDVRARPRYFVQQVIRPSSKENE).

This sequence belongs to the glycosyltransferase 2 family.

Its subcellular location is the cell inner membrane. The enzyme catalyses UDP-4-deoxy-4-formamido-beta-L-arabinose + di-trans,octa-cis-undecaprenyl phosphate = 4-deoxy-4-formamido-alpha-L-arabinopyranosyl di-trans,octa-cis-undecaprenyl phosphate + UDP. Its pathway is glycolipid biosynthesis; 4-amino-4-deoxy-alpha-L-arabinose undecaprenyl phosphate biosynthesis; 4-amino-4-deoxy-alpha-L-arabinose undecaprenyl phosphate from UDP-4-deoxy-4-formamido-beta-L-arabinose and undecaprenyl phosphate: step 1/2. The protein operates within bacterial outer membrane biogenesis; lipopolysaccharide biosynthesis. Catalyzes the transfer of 4-deoxy-4-formamido-L-arabinose from UDP to undecaprenyl phosphate. The modified arabinose is attached to lipid A and is required for resistance to polymyxin and cationic antimicrobial peptides. The sequence is that of Undecaprenyl-phosphate 4-deoxy-4-formamido-L-arabinose transferase from Escherichia coli O157:H7 (strain EC4115 / EHEC).